We begin with the raw amino-acid sequence, 989 residues long: Bifunctional glutamine synthetase adenylyltransferase/adenylyl-removing enzyme (989 aa).

The segment at 1–473 is adenylyl removase; the sequence is MRGPLEPDSA…HYANLFEDVA (473 aa). An adenylyl transferase region spans residues 479 to 989; sequence DADLMFPPDE…FERILETAAE (511 aa).

It belongs to the GlnE family. Mg(2+) serves as cofactor.

The enzyme catalyses [glutamine synthetase]-O(4)-(5'-adenylyl)-L-tyrosine + phosphate = [glutamine synthetase]-L-tyrosine + ADP. The catalysed reaction is [glutamine synthetase]-L-tyrosine + ATP = [glutamine synthetase]-O(4)-(5'-adenylyl)-L-tyrosine + diphosphate. Involved in the regulation of glutamine synthetase GlnA, a key enzyme in the process to assimilate ammonia. When cellular nitrogen levels are high, the C-terminal adenylyl transferase (AT) inactivates GlnA by covalent transfer of an adenylyl group from ATP to specific tyrosine residue of GlnA, thus reducing its activity. Conversely, when nitrogen levels are low, the N-terminal adenylyl removase (AR) activates GlnA by removing the adenylyl group by phosphorolysis, increasing its activity. The regulatory region of GlnE binds the signal transduction protein PII (GlnB) which indicates the nitrogen status of the cell. In Xanthobacter autotrophicus (strain ATCC BAA-1158 / Py2), this protein is Bifunctional glutamine synthetase adenylyltransferase/adenylyl-removing enzyme.